A 653-amino-acid chain; its full sequence is MADTLPSEFDVIVIGTGLPESIIAAACSRSGRRVLHVDSRSYYGGNWASFSFSGLLSWLKEYQENSDIVSDSPVWQDQILENEEAIALSRKDKTIQHVEVFCYASQDLHEDVEEAGALQKNHALVTSANSTEAADSAFLPTEDESLSTMSCEMLTEQTPSSDPENALEVNGAEVTGEKENHCDDKTCVPSTSAEDMSENVPIAEDTTEQPKKNRITYSQIIKEGRRFNIDLVSKLLYSRGLLIDLLIKSNVSRYAEFKNITRILAFREGRVEQVPCSRADVFNSKQLTMVEKRMLMKFLTFCMEYEKYPDEYKGYEEITFYEYLKTQKLTPNLQYIVMHSIAMTSETASSTIDGLKATKNFLHCLGRYGNTPFLFPLYGQGELPQCFCRMCAVFGGIYCLRHSVQCLVVDKESRKCKAIIDQFGQRIISEHFLVEDSYFPENMCSRVQYRQISRAVLITDRSVLKTDSDQQISILTVPAEEPGTFAVRVIELCSSTMTCMKGTYLVHLTCTSSKTAREDLESVVQKLFVPYTEMEIENEQVEKPRILWALYFNMRDSSDISRSCYNDLPSNVYVCSGPDCGLGNDNAVKQAETLFQEICPNEDFCPPPPNPEDIILDGDSLQPEASESSAIPEANSETFKESTNLGNLEESSE.

A disordered region spans residues 606 to 653; sequence PPPPNPEDIILDGDSLQPEASESSAIPEANSETFKESTNLGNLEESSE. Residues 623–646 show a composition bias toward polar residues; the sequence is PEASESSAIPEANSETFKESTNLG.

The protein belongs to the Rab GDI family. Monomer. Heterotrimer composed of RABGGTA, RABGGTB and CHM; within this trimer, RABGGTA and RABGGTB form the catalytic component B, while CHM (component A) mediates Rab protein binding. Can associate with the Rab GGTase dimer (RGGT or component B) prior to Rab protein binding; the association is stabilized by geranylgeranyl pyrophosphate (GGpp). The CHM:RGGT:Rab complex is destabilized by GGpp. Interacts with RAB1A, RAB1B, RAB5A, RAB7A and RAB27A and mediates their prenylation. Interacts with the non-phosphorylated forms of RAB3A, RAB3B, RAB3C, RAB3D, RAB5B, RAB5C, RAB8A, RAB8B, RAB10, RAB12, RAB35, and RAB43.

Its subcellular location is the cytoplasm. It is found in the cytosol. Substrate-binding subunit of the Rab geranylgeranyltransferase (GGTase) complex. Binds unprenylated Rab proteins and presents the substrate peptide to the catalytic component B composed of RABGGTA and RABGGTB, and remains bound to it after the geranylgeranyl transfer reaction. The component A is thought to be regenerated by transferring its prenylated Rab back to the donor membrane. Besides, a pre-formed complex consisting of CHM and the Rab GGTase dimer (RGGT or component B) can bind to and prenylate Rab proteins; this alternative pathway is proposed to be the predominant pathway for Rab protein geranylgeranylation. The protein is Rab proteins geranylgeranyltransferase component A 1 (CHM) of Homo sapiens (Human).